Consider the following 277-residue polypeptide: 4-hydroxy-3-methylbut-2-enyl diphosphate reductase (277 aa).

Cys12 is a [4Fe-4S] cluster binding site. Residues His36 and His70 each coordinate (2E)-4-hydroxy-3-methylbut-2-enyl diphosphate. Dimethylallyl diphosphate contacts are provided by His36 and His70. Positions 36 and 70 each coordinate isopentenyl diphosphate. Cys92 is a [4Fe-4S] cluster binding site. His120 contributes to the (2E)-4-hydroxy-3-methylbut-2-enyl diphosphate binding site. His120 contacts dimethylallyl diphosphate. Position 120 (His120) interacts with isopentenyl diphosphate. The active-site Proton donor is Glu122. Thr160 serves as a coordination point for (2E)-4-hydroxy-3-methylbut-2-enyl diphosphate. Cys188 is a binding site for [4Fe-4S] cluster. (2E)-4-hydroxy-3-methylbut-2-enyl diphosphate contacts are provided by Ser216, Ser217, Asn218, and Ser260. Dimethylallyl diphosphate contacts are provided by Ser216, Ser217, Asn218, and Ser260. Residues Ser216, Ser217, Asn218, and Ser260 each contribute to the isopentenyl diphosphate site.

Belongs to the IspH family. [4Fe-4S] cluster serves as cofactor.

It catalyses the reaction isopentenyl diphosphate + 2 oxidized [2Fe-2S]-[ferredoxin] + H2O = (2E)-4-hydroxy-3-methylbut-2-enyl diphosphate + 2 reduced [2Fe-2S]-[ferredoxin] + 2 H(+). The catalysed reaction is dimethylallyl diphosphate + 2 oxidized [2Fe-2S]-[ferredoxin] + H2O = (2E)-4-hydroxy-3-methylbut-2-enyl diphosphate + 2 reduced [2Fe-2S]-[ferredoxin] + 2 H(+). Its pathway is isoprenoid biosynthesis; dimethylallyl diphosphate biosynthesis; dimethylallyl diphosphate from (2E)-4-hydroxy-3-methylbutenyl diphosphate: step 1/1. It functions in the pathway isoprenoid biosynthesis; isopentenyl diphosphate biosynthesis via DXP pathway; isopentenyl diphosphate from 1-deoxy-D-xylulose 5-phosphate: step 6/6. In terms of biological role, catalyzes the conversion of 1-hydroxy-2-methyl-2-(E)-butenyl 4-diphosphate (HMBPP) into a mixture of isopentenyl diphosphate (IPP) and dimethylallyl diphosphate (DMAPP). Acts in the terminal step of the DOXP/MEP pathway for isoprenoid precursor biosynthesis. The sequence is that of 4-hydroxy-3-methylbut-2-enyl diphosphate reductase from Sulfurovum sp. (strain NBC37-1).